The sequence spans 539 residues: Dihydrolipoyllysine-residue acetyltransferase component 3 of pyruvate dehydrogenase complex, mitochondrial (539 aa).

Residues 1–102 constitute a mitochondrion transit peptide; sequence MAYASRIINH…SCLMQSARGF (102 aa). The Lipoyl-binding domain occupies 111–187; that stretch reads HQEIGMPSLS…QVGEVIAITV (77 aa). Position 152 is an N6-lipoyllysine (K152). Residues 195–247 are disordered; it reads KFKDYTPSSTADAAPTKAEPTPAPPKEEKVKQPSSPPEPKASKPSTPPTGDRV. Over residues 204–214 the composition is skewed to low complexity; sequence TADAAPTKAEP. The 38-residue stretch at 248 to 285 folds into the Peripheral subunit-binding (PSBD) domain; it reads FASPLARKLAEDNNVPLSDIEGTGPEGRIVKADIDEYL. Residues H512 and D516 contribute to the active site.

It belongs to the 2-oxoacid dehydrogenase family. (R)-lipoate serves as cofactor.

The protein resides in the mitochondrion matrix. The catalysed reaction is N(6)-[(R)-dihydrolipoyl]-L-lysyl-[protein] + acetyl-CoA = N(6)-[(R)-S(8)-acetyldihydrolipoyl]-L-lysyl-[protein] + CoA. Functionally, the pyruvate dehydrogenase complex catalyzes the overall conversion of pyruvate to acetyl-CoA and CO(2). It contains multiple copies of three enzymatic components: pyruvate dehydrogenase (E1), dihydrolipoamide acetyltransferase (E2) and lipoamide dehydrogenase (E3). The protein is Dihydrolipoyllysine-residue acetyltransferase component 3 of pyruvate dehydrogenase complex, mitochondrial of Arabidopsis thaliana (Mouse-ear cress).